The primary structure comprises 309 residues: Aspartate carbamoyltransferase catalytic subunit (309 aa).

The carbamoyl phosphate site is built by arginine 58 and threonine 59. Lysine 86 contributes to the L-aspartate binding site. The carbamoyl phosphate site is built by arginine 108, histidine 136, and glutamine 139. Arginine 170 and arginine 224 together coordinate L-aspartate. Carbamoyl phosphate-binding residues include glycine 266 and proline 267.

It belongs to the aspartate/ornithine carbamoyltransferase superfamily. ATCase family. Heterododecamer (2C3:3R2) of six catalytic PyrB chains organized as two trimers (C3), and six regulatory PyrI chains organized as three dimers (R2).

The catalysed reaction is carbamoyl phosphate + L-aspartate = N-carbamoyl-L-aspartate + phosphate + H(+). The protein operates within pyrimidine metabolism; UMP biosynthesis via de novo pathway; (S)-dihydroorotate from bicarbonate: step 2/3. Catalyzes the condensation of carbamoyl phosphate and aspartate to form carbamoyl aspartate and inorganic phosphate, the committed step in the de novo pyrimidine nucleotide biosynthesis pathway. This is Aspartate carbamoyltransferase catalytic subunit from Campylobacter curvus (strain 525.92).